The chain runs to 277 residues: Putative thiosulfate sulfurtransferase (277 aa).

Rhodanese domains lie at 18 to 125 and 154 to 274; these read KAPK…PLSA and AIGT…APIE. An Isoglutamyl lysine isopeptide (Lys-Gln) (interchain with Q-Cter in protein Pup) cross-link involves residue Lys-67. The active-site Cysteine persulfide intermediate is Cys-233. Arg-238 provides a ligand contact to substrate.

The enzyme catalyses thiosulfate + hydrogen cyanide = thiocyanate + sulfite + 2 H(+). May be a sulfotransferase involved in the formation of thiosulfate. The polypeptide is Putative thiosulfate sulfurtransferase (Mycolicibacterium smegmatis (strain ATCC 700084 / mc(2)155) (Mycobacterium smegmatis)).